A 180-amino-acid polypeptide reads, in one-letter code: Isopentenyl-diphosphate Delta-isomerase (180 aa).

His22 and His28 together coordinate Mn(2+). The Nudix hydrolase domain occupies 26-160 (LKHKAVSVFA…PERFTPWLKI (135 aa)). Residue Cys62 is part of the active site. Cys62 contributes to the Mg(2+) binding site. His64 serves as a coordination point for Mn(2+). Glu82 serves as a coordination point for Mg(2+). 2 residues coordinate Mn(2+): Glu108 and Glu110. Glu110 is a catalytic residue.

It belongs to the IPP isomerase type 1 family. Mg(2+) serves as cofactor. Mn(2+) is required as a cofactor.

It localises to the cytoplasm. It catalyses the reaction isopentenyl diphosphate = dimethylallyl diphosphate. It participates in isoprenoid biosynthesis; dimethylallyl diphosphate biosynthesis; dimethylallyl diphosphate from isopentenyl diphosphate: step 1/1. Its function is as follows. Catalyzes the 1,3-allylic rearrangement of the homoallylic substrate isopentenyl (IPP) to its highly electrophilic allylic isomer, dimethylallyl diphosphate (DMAPP). This is Isopentenyl-diphosphate Delta-isomerase from Ruegeria pomeroyi (strain ATCC 700808 / DSM 15171 / DSS-3) (Silicibacter pomeroyi).